The primary structure comprises 257 residues: 3-deoxy-manno-octulosonate cytidylyltransferase (257 aa).

The protein belongs to the KdsB family.

It localises to the cytoplasm. The enzyme catalyses 3-deoxy-alpha-D-manno-oct-2-ulosonate + CTP = CMP-3-deoxy-beta-D-manno-octulosonate + diphosphate. Its pathway is nucleotide-sugar biosynthesis; CMP-3-deoxy-D-manno-octulosonate biosynthesis; CMP-3-deoxy-D-manno-octulosonate from 3-deoxy-D-manno-octulosonate and CTP: step 1/1. It participates in bacterial outer membrane biogenesis; lipopolysaccharide biosynthesis. Functionally, activates KDO (a required 8-carbon sugar) for incorporation into bacterial lipopolysaccharide in Gram-negative bacteria. This Methylococcus capsulatus (strain ATCC 33009 / NCIMB 11132 / Bath) protein is 3-deoxy-manno-octulosonate cytidylyltransferase.